We begin with the raw amino-acid sequence, 3305 residues long: Microtubule-actin cross-linking factor 1, isoforms 6/7 (3305 aa).

Disordered stretches follow at residues 1–24, 108–140, 152–202, 239–272, 333–381, 941–1007, and 2865–2896; these read MGKPLSRPDCLRRNPTCLGKGEDE, VQKSAPVPPRRRPNAERKDNVNRRSWKSFMPPN, LSEV…KSVD, AAASGNTDEMQEHRFSSATWPRAMKSSSKGGFSE, EEWE…VAVS, EPAI…PEWS, and SVEPTHAPFMEKSRSGSRKSLNQPTPPPMPIL. The segment covering 120–129 has biased composition (basic and acidic residues); the sequence is PNAERKDNVN. 2 consecutive EF-hand domains span residues 2958–2993 and 2994–3029; these read HKKSRVMDFFRRIDKDQDGKITRQEFIDGILASKFP and TTKLEMTAVADIFDRDGDGYIDYYEFVAALHPNKDA. Positions 2971, 2973, 2975, 2977, 2982, 3007, 3009, 3011, 3013, and 3018 each coordinate Ca(2+). A GAR domain is found at 3034-3106; it reads TDADKIEDEV…EFLVKNDPCR (73 aa). The tract at residues 3122–3305 is disordered; that stretch reads PEGASQGMTP…ASPRTPGPKR (184 aa). The span at 3142-3176 shows a compositional bias: low complexity; sequence SSRAASPTRSSSSASQSNHSCTSMPSSPATPASGT. A compositionally biased stretch (polar residues) spans 3193 to 3212; that stretch reads FHSSRTSLAGDTSNSSSPAS. Residues 3227–3241 are compositionally biased toward low complexity; sequence SRPGSRAGSRAGSRA. Residues 3256-3266 are compositionally biased toward polar residues; it reads ETQSACSDTSE. The span at 3267–3278 shows a compositional bias: low complexity; the sequence is SSAAGGQGSSRR.

The protein resides in the cytoplasm. It is found in the cytoskeleton. This chain is Microtubule-actin cross-linking factor 1, isoforms 6/7, found in Mus musculus (Mouse).